The sequence spans 666 residues: tRNA 5-methylaminomethyl-2-thiouridine biosynthesis bifunctional protein MnmC (666 aa).

A tRNA (mnm(5)s(2)U34)-methyltransferase region spans residues 1–245; it reads MKQYAIQPAT…KREMLCGVME (245 aa). An FAD-dependent cmnm(5)s(2)U34 oxidoreductase region spans residues 270 to 666; sequence IGGGIASALL…RKLLKGKAVK (397 aa).

It in the N-terminal section; belongs to the methyltransferase superfamily. tRNA (mnm(5)s(2)U34)-methyltransferase family. In the C-terminal section; belongs to the DAO family. Requires FAD as cofactor.

It localises to the cytoplasm. It catalyses the reaction 5-aminomethyl-2-thiouridine(34) in tRNA + S-adenosyl-L-methionine = 5-methylaminomethyl-2-thiouridine(34) in tRNA + S-adenosyl-L-homocysteine + H(+). Its function is as follows. Catalyzes the last two steps in the biosynthesis of 5-methylaminomethyl-2-thiouridine (mnm(5)s(2)U) at the wobble position (U34) in tRNA. Catalyzes the FAD-dependent demodification of cmnm(5)s(2)U34 to nm(5)s(2)U34, followed by the transfer of a methyl group from S-adenosyl-L-methionine to nm(5)s(2)U34, to form mnm(5)s(2)U34. The sequence is that of tRNA 5-methylaminomethyl-2-thiouridine biosynthesis bifunctional protein MnmC from Salmonella paratyphi A (strain ATCC 9150 / SARB42).